A 152-amino-acid chain; its full sequence is Nucleoside diphosphate kinase (152 aa).

6 residues coordinate ATP: Lys-11, Phe-59, Arg-87, Thr-93, Arg-104, and Asn-114. Residue His-117 is the Pros-phosphohistidine intermediate of the active site.

Belongs to the NDK family. As to quaternary structure, homotetramer. The cofactor is Mg(2+).

The protein resides in the cytoplasm. The catalysed reaction is dZDP + ATP = dZTP + ADP. The enzyme catalyses a 2'-deoxyribonucleoside 5'-diphosphate + ATP = a 2'-deoxyribonucleoside 5'-triphosphate + ADP. It catalyses the reaction a ribonucleoside 5'-diphosphate + ATP = a ribonucleoside 5'-triphosphate + ADP. The protein operates within purine metabolism. Its function is as follows. Major role in the synthesis of nucleoside triphosphates other than ATP. The ATP gamma phosphate is transferred to the NDP beta phosphate via a ping-pong mechanism, using a phosphorylated active-site intermediate. In terms of biological role, (Microbial infection) Catalyzes the phosphorylation of dZDP to dZTP, when the bacterium is infected by a phage that produces the substrate for the synthesis of dZTP (2- amino-2'-deoxyadenosine 5'-triphosphate), which is then used by the phage as a DNA polymerase substrate. The sequence is that of Nucleoside diphosphate kinase from Synechococcus sp. (strain WH7803).